The sequence spans 212 residues: Phosphatidylserine decarboxylase proenzyme (212 aa).

The Schiff-base intermediate with substrate; via pyruvic acid role is filled by Ser182. The residue at position 182 (Ser182) is a Pyruvic acid (Ser); by autocatalysis.

The protein belongs to the phosphatidylserine decarboxylase family. PSD-A subfamily. As to quaternary structure, heterodimer of a large membrane-associated beta subunit and a small pyruvoyl-containing alpha subunit. The cofactor is pyruvate. Is synthesized initially as an inactive proenzyme. Formation of the active enzyme involves a self-maturation process in which the active site pyruvoyl group is generated from an internal serine residue via an autocatalytic post-translational modification. Two non-identical subunits are generated from the proenzyme in this reaction, and the pyruvate is formed at the N-terminus of the alpha chain, which is derived from the carboxyl end of the proenzyme. The post-translation cleavage follows an unusual pathway, termed non-hydrolytic serinolysis, in which the side chain hydroxyl group of the serine supplies its oxygen atom to form the C-terminus of the beta chain, while the remainder of the serine residue undergoes an oxidative deamination to produce ammonia and the pyruvoyl prosthetic group on the alpha chain.

It localises to the cell membrane. The catalysed reaction is a 1,2-diacyl-sn-glycero-3-phospho-L-serine + H(+) = a 1,2-diacyl-sn-glycero-3-phosphoethanolamine + CO2. It participates in phospholipid metabolism; phosphatidylethanolamine biosynthesis; phosphatidylethanolamine from CDP-diacylglycerol: step 2/2. Functionally, catalyzes the formation of phosphatidylethanolamine (PtdEtn) from phosphatidylserine (PtdSer). This is Phosphatidylserine decarboxylase proenzyme from Chlorobium phaeobacteroides (strain DSM 266 / SMG 266 / 2430).